Reading from the N-terminus, the 632-residue chain is tRNA uridine 5-carboxymethylaminomethyl modification enzyme MnmG (632 aa).

FAD contacts are provided by residues 13–18 (GGGHAG), Val-125, and Ser-180. 273–287 (GPRYCPSIEDKVMRF) lines the NAD(+) pocket. Gln-370 contacts FAD.

It belongs to the MnmG family. In terms of assembly, homodimer. Heterotetramer of two MnmE and two MnmG subunits. Requires FAD as cofactor.

It is found in the cytoplasm. In terms of biological role, NAD-binding protein involved in the addition of a carboxymethylaminomethyl (cmnm) group at the wobble position (U34) of certain tRNAs, forming tRNA-cmnm(5)s(2)U34. The polypeptide is tRNA uridine 5-carboxymethylaminomethyl modification enzyme MnmG (Vibrio vulnificus (strain CMCP6)).